A 264-amino-acid chain; its full sequence is Phosphonoacetaldehyde hydrolase (264 aa).

Residue Asp-9 is the Nucleophile of the active site. Residues Asp-9 and Ala-11 each coordinate Mg(2+). Lys-50 functions as the Schiff-base intermediate with substrate in the catalytic mechanism. Asp-183 lines the Mg(2+) pocket.

It belongs to the HAD-like hydrolase superfamily. PhnX family. As to quaternary structure, homodimer. The cofactor is Mg(2+).

It carries out the reaction phosphonoacetaldehyde + H2O = acetaldehyde + phosphate + H(+). In terms of biological role, involved in phosphonate degradation. In Bacillus cereus (strain ATCC 14579 / DSM 31 / CCUG 7414 / JCM 2152 / NBRC 15305 / NCIMB 9373 / NCTC 2599 / NRRL B-3711), this protein is Phosphonoacetaldehyde hydrolase.